Here is a 270-residue protein sequence, read N- to C-terminus: NAD kinase (270 aa).

Catalysis depends on Asp-45, which acts as the Proton acceptor. Residues 45 to 46 (DG), 121 to 122 (NE), Lys-147, Asp-149, 160 to 165 (TAYSKS), and Ala-184 contribute to the NAD(+) site.

The protein belongs to the NAD kinase family. A divalent metal cation is required as a cofactor.

The protein resides in the cytoplasm. The catalysed reaction is NAD(+) + ATP = ADP + NADP(+) + H(+). Functionally, involved in the regulation of the intracellular balance of NAD and NADP, and is a key enzyme in the biosynthesis of NADP. Catalyzes specifically the phosphorylation on 2'-hydroxyl of the adenosine moiety of NAD to yield NADP. In Lactobacillus johnsonii (strain CNCM I-12250 / La1 / NCC 533), this protein is NAD kinase.